The chain runs to 330 residues: Tryptophan--tRNA ligase (330 aa).

ATP-binding positions include 10-12 (QTT) and 18-19 (GN). The 'HIGH' region signature appears at 11–19 (TTGALHLGN). Asp-134 serves as a coordination point for L-tryptophan. Residues 146–148 (GED), Ile-186, and 195–199 (KMSKS) each bind ATP. The 'KMSKS' region motif lies at 195–199 (KMSKS).

It belongs to the class-I aminoacyl-tRNA synthetase family. Homodimer.

The protein localises to the cytoplasm. It carries out the reaction tRNA(Trp) + L-tryptophan + ATP = L-tryptophyl-tRNA(Trp) + AMP + diphosphate + H(+). Catalyzes the attachment of tryptophan to tRNA(Trp). The sequence is that of Tryptophan--tRNA ligase from Rickettsia typhi (strain ATCC VR-144 / Wilmington).